A 199-amino-acid chain; its full sequence is uncharacterized protein (199 aa).

The G-patch domain occupies 112–160 (PKSLGYRVLSQYGWSPQGDTAGLGLENQGRRAPVRAFRVKNDTIGLGTK).

This is an uncharacterized protein from Schizosaccharomyces pombe (strain 972 / ATCC 24843) (Fission yeast).